The sequence spans 114 residues: MRVKKGFKARRRRNRVLKLAKGFRGRRKNCYRRANQAVERALNYSTRDRRLKRREFRALWIVRINAAARQNGTTYSKLVAALRKAGVEIDRKILADLALALPGDFAAIVKTAQA.

Belongs to the bacterial ribosomal protein bL20 family.

In terms of biological role, binds directly to 23S ribosomal RNA and is necessary for the in vitro assembly process of the 50S ribosomal subunit. It is not involved in the protein synthesizing functions of that subunit. This Anaeromyxobacter dehalogenans (strain 2CP-C) protein is Large ribosomal subunit protein bL20.